We begin with the raw amino-acid sequence, 515 residues long: Pre-glycoprotein polyprotein GP complex (515 aa).

Glycine 2 carries N-myristoyl glycine; by host lipidation. The Extracellular segment spans residues 2-17; it reads GQVIGFFQSLPEIINE. The chain crosses the membrane as a helical span at residues 18–33; that stretch reads ALNIALICVALLATIK. Residues 34–58 are Cytoplasmic-facing; that stretch reads GMVNIWKSGLIQLLFFLTLAGRSCS. Cysteine 57 lines the Zn(2+) pocket. Residues 59 to 453 lie on the Extracellular side of the membrane; that stretch reads HSFTIGRFHE…QGRTPLSLVD (395 aa). Cystine bridges form between cysteine 87–cysteine 255, cysteine 300–cysteine 313, cysteine 322–cysteine 331, and cysteine 385–cysteine 406. Residues asparagine 90, asparagine 112, asparagine 127, asparagine 180, and asparagine 248 are each glycosylated (N-linked (GlcNAc...) asparagine; by host). Residues asparagine 386, asparagine 394, and asparagine 416 are each glycosylated (N-linked (GlcNAc...) asparagine; by host). A helical transmembrane segment spans residues 454-474; it reads LCFWSTLFYISTLFAHLVGFP. Residues 475–515 are Cytoplasmic-facing; that stretch reads THRHLIGEGCPKPHRLTGSGICSCGHYGIPGKPVRWTKMSR. Residues histidine 476, histidine 478, cysteine 484, histidine 488, cysteine 496, and cysteine 498 each contribute to the Zn(2+) site.

The protein belongs to the arenaviridae GPC protein family. In terms of assembly, interacts with glycoprotein G2. Part of the GP complex (GP-C) together with glycoprotein G1 and glycoprotein G2. The GP-complex interacts with protein Z, which interacts with ribonucleocapsid; these interactions may induce virion budding. As to quaternary structure, homotrimer; disulfide-linked. In pre-fusion state, G1 homotrimers bind G2 homotrimers via ionic interactions. Part of the GP complex (GP-C) together with glycoprotein G2 and the stable signal peptide. The GP-complex interacts with protein Z, which interacts with ribonucleocapsid; these interactions may induce virion budding. Homotrimer. Interacts with the stable signal peptide. In pre-fusion state, G2 homotrimers bind G1 homotrimers via ionic interactions. Part of the GP complex (GP-C) together with glycoprotein G1 and the stable signal peptide. Acidification in the endosome triggers rearrangements, which ultimately leads to a 6 helix bundle formed by the two heptad repeat domains (HR1 and HR2) in post-fusion state. The GP-complex interacts with protein Z, which interacts with ribonucleocapsid; these interactions may induce virion budding. Post-translationally, specific enzymatic cleavages in vivo yield mature proteins. GP-C polyprotein is cleaved in the endoplasmic reticulum by the host protease MBTPS1. Only cleaved glycoprotein is incorporated into virions. In terms of processing, the SSP remains stably associated with the GP complex following cleavage by signal peptidase and plays crucial roles in the trafficking of GP through the secretory pathway. Myristoylation is necessary for GP2-mediated fusion activity.

It localises to the virion membrane. It is found in the host endoplasmic reticulum membrane. The protein localises to the host Golgi apparatus membrane. The protein resides in the host cell membrane. In terms of biological role, functions as a cleaved signal peptide that is retained as the third component of the GP complex (GP-C). Helps to stabilize the spike complex in its native conformation. The SSP is required for efficient glycoprotein expression, post-translational maturation cleavage of G1 and G2, glycoprotein transport to the cell surface plasma membrane, formation of infectious virus particles, and acid pH-dependent glycoprotein-mediated cell fusion. Forms the virion spikes together with glycoprotein G2. The glycoprotein spike trimers are connected to the underlying matrix. Mediates virus attachment to host receptor alpha-dystroglycan DAG1. This attachment induces virion internalization predominantly through clathrin- and caveolin-independent endocytosis. Functionally, forms the virion spikes together with glycoprotein G1. The glycoprotein spike trimers are connected to the underlying matrix. Class I viral fusion protein that directs fusion of viral and host endosomal membranes, leading to delivery of the nucleocapsid into the cytoplasm. Membrane fusion is mediated by irreversible conformational changes induced by acidification. This chain is Pre-glycoprotein polyprotein GP complex, found in Latino mammarenavirus (isolate Rat/Bolivia/MARU 1924/1965) (LATV).